The primary structure comprises 255 residues: uncharacterized protein (255 aa).

The protein belongs to the methyltransferase superfamily.

This is an uncharacterized protein from Mycolicibacterium paratuberculosis (strain ATCC BAA-968 / K-10) (Mycobacterium paratuberculosis).